We begin with the raw amino-acid sequence, 323 residues long: Transmembrane protein 171 (323 aa).

A run of 4 helical transmembrane segments spans residues 22 to 42 (IFFL…ISIF), 57 to 77 (MVLK…VILA), 112 to 132 (LIFG…GIWV), and 159 to 179 (FLSL…FFVV). Residues 251-268 (YSSLFNLSRTPTPENQGA) show a composition bias toward polar residues. The tract at residues 251 to 323 (YSSLFNLSRT…LGAPSESSPP (73 aa)) is disordered. Residues 281–290 (SGPGSSSESS) are compositionally biased toward low complexity.

Its subcellular location is the membrane. This Rattus norvegicus (Rat) protein is Transmembrane protein 171 (Tmem171).